We begin with the raw amino-acid sequence, 533 residues long: Beta-glucosidase 22 (533 aa).

A signal peptide spans 1-24; the sequence is MAVSSSTSTCSSFSLLLLLLLLAA. Asn-41 carries N-linked (GlcNAc...) asparagine glycosylation. Residues Gln-61, His-161, and 206–207 each bind a beta-D-glucoside; that span reads DE. Glu-207 acts as the Proton donor in catalysis. A disulfide bridge links Cys-226 with Cys-234. N-linked (GlcNAc...) asparagine glycans are attached at residues Asn-233 and Asn-238. Residues Tyr-350 and Glu-421 each contribute to the a beta-D-glucoside site. The Nucleophile role is filled by Glu-421. Residue Asn-435 is glycosylated (N-linked (GlcNAc...) asparagine). Trp-466 and Phe-482 together coordinate a beta-D-glucoside.

This sequence belongs to the glycosyl hydrolase 1 family.

It catalyses the reaction Hydrolysis of terminal, non-reducing beta-D-glucosyl residues with release of beta-D-glucose.. This is Beta-glucosidase 22 (BGLU22) from Oryza sativa subsp. japonica (Rice).